Here is a 56-residue protein sequence, read N- to C-terminus: Large ribosomal subunit protein bL32c (56 aa).

This sequence belongs to the bacterial ribosomal protein bL32 family.

Its subcellular location is the plastid. It is found in the chloroplast. The protein is Large ribosomal subunit protein bL32c of Tupiella akineta (Green alga).